The following is a 125-amino-acid chain: Holo-[acyl-carrier-protein] synthase (125 aa).

Residues D8 and E56 each coordinate Mg(2+).

The protein belongs to the P-Pant transferase superfamily. AcpS family. Requires Mg(2+) as cofactor.

It localises to the cytoplasm. The enzyme catalyses apo-[ACP] + CoA = holo-[ACP] + adenosine 3',5'-bisphosphate + H(+). Transfers the 4'-phosphopantetheine moiety from coenzyme A to a Ser of acyl-carrier-protein. This chain is Holo-[acyl-carrier-protein] synthase, found in Borrelia turicatae (strain 91E135).